We begin with the raw amino-acid sequence, 330 residues long: 7,8-didemethyl-8-hydroxy-5-deazariboflavin synthase (330 aa).

The 241-residue stretch at 13–253 folds into the Radical SAM core domain; it reads VTFSKNAFIP…EDISIQVPPN (241 aa). 3 residues coordinate [4Fe-4S] cluster: Cys27, Cys31, and Cys34.

Belongs to the radical SAM superfamily. CofG family. Consists of two subunits, CofG and CofH. The cofactor is [4Fe-4S] cluster.

The catalysed reaction is 5-amino-5-(4-hydroxybenzyl)-6-(D-ribitylimino)-5,6-dihydrouracil + S-adenosyl-L-methionine = 7,8-didemethyl-8-hydroxy-5-deazariboflavin + 5'-deoxyadenosine + L-methionine + NH4(+) + H(+). The protein operates within cofactor biosynthesis; coenzyme F0 biosynthesis. Catalyzes the radical-mediated synthesis of 7,8-didemethyl-8-hydroxy-5-deazariboflavin from 5-amino-5-(4-hydroxybenzyl)-6-(D-ribitylimino)-5,6-dihydrouracil. The protein is 7,8-didemethyl-8-hydroxy-5-deazariboflavin synthase of Methanococcus maripaludis (strain DSM 14266 / JCM 13030 / NBRC 101832 / S2 / LL).